The primary structure comprises 990 residues: Insulin-degrading enzyme (990 aa).

His-81 is a binding site for Zn(2+). Glu-84 functions as the Proton acceptor in the catalytic mechanism. The Zn(2+) site is built by His-85 and Glu-162.

This sequence belongs to the peptidase M16 family. Zn(2+) is required as a cofactor.

The enzyme catalyses Degradation of insulin, glucagon and other polypeptides. No action on proteins.. Functionally, can cleave insulin and TGF-alpha. This is Insulin-degrading enzyme (Ide) from Drosophila melanogaster (Fruit fly).